A 475-amino-acid chain; its full sequence is Ribulose bisphosphate carboxylase large chain (475 aa).

Residues 1–2 constitute a propeptide that is removed on maturation; sequence MS. Residue Pro3 is modified to N-acetylproline. Lys14 carries the post-translational modification N6,N6,N6-trimethyllysine. Substrate is bound by residues Asn123 and Thr173. The active-site Proton acceptor is Lys175. Residue Lys177 coordinates substrate. 3 residues coordinate Mg(2+): Lys201, Asp203, and Glu204. Position 201 is an N6-carboxylysine (Lys201). The Proton acceptor role is filled by His294. Substrate contacts are provided by Arg295, His327, and Ser379.

This sequence belongs to the RuBisCO large chain family. Type I subfamily. As to quaternary structure, heterohexadecamer of 8 large chains and 8 small chains; disulfide-linked. The disulfide link is formed within the large subunit homodimers. The cofactor is Mg(2+). In terms of processing, the disulfide bond which can form in the large chain dimeric partners within the hexadecamer appears to be associated with oxidative stress and protein turnover.

It is found in the plastid. It localises to the chloroplast. The enzyme catalyses 2 (2R)-3-phosphoglycerate + 2 H(+) = D-ribulose 1,5-bisphosphate + CO2 + H2O. It carries out the reaction D-ribulose 1,5-bisphosphate + O2 = 2-phosphoglycolate + (2R)-3-phosphoglycerate + 2 H(+). RuBisCO catalyzes two reactions: the carboxylation of D-ribulose 1,5-bisphosphate, the primary event in carbon dioxide fixation, as well as the oxidative fragmentation of the pentose substrate in the photorespiration process. Both reactions occur simultaneously and in competition at the same active site. This Betula papyrifera (Paper birch) protein is Ribulose bisphosphate carboxylase large chain.